A 288-amino-acid chain; its full sequence is Small ribosomal subunit protein uS3 (288 aa).

One can recognise a KH type-2 domain in the interval 38 to 106; the sequence is IRRMMSKGLE…QVQLNIIEVK (69 aa). The segment at 209–288 is disordered; sequence PGRETPAEAP…TQPAETQQEG (80 aa). Residues 219 to 232 show a composition bias toward basic and acidic residues; that stretch reads SRPRRERGDRSERP. Over residues 249–264 the composition is skewed to low complexity; that stretch reads AGRAAATTIAQAAETP. Polar residues predominate over residues 277 to 288; sequence AATQPAETQQEG.

The protein belongs to the universal ribosomal protein uS3 family. As to quaternary structure, part of the 30S ribosomal subunit. Forms a tight complex with proteins S10 and S14.

Functionally, binds the lower part of the 30S subunit head. Binds mRNA in the 70S ribosome, positioning it for translation. The sequence is that of Small ribosomal subunit protein uS3 from Salinispora tropica (strain ATCC BAA-916 / DSM 44818 / JCM 13857 / NBRC 105044 / CNB-440).